Consider the following 581-residue polypeptide: Protein phosphatase 2C 70 (581 aa).

Residues methionine 1–asparagine 7 are Extracellular-facing. Residues isoleucine 8–cysteine 28 form a helical membrane-spanning segment. Residues lysine 29 to leucine 581 lie on the Cytoplasmic side of the membrane. The 52-residue stretch at valine 208–isoleucine 259 folds into the FHA domain. In terms of domain architecture, PPM-type phosphatase spans lysine 304–phenylalanine 577. Residues aspartate 346, glycine 347, aspartate 521, and aspartate 568 each coordinate Mn(2+).

As to quaternary structure, association of RLK5 with kapp domain is dependent on phosphorylation of RLK5 and can be abolished by dephosphorylation. Interacts with SERK1 and CDC48A. Component of the SERK1 signaling complex, composed of KAPP, CDC48A, GRF6 or GRF7, SERK1, SERK2, SERK3/BAK1 and BRI1. Interacts with CLV1. Requires Mg(2+) as cofactor. It depends on Mn(2+) as a cofactor. Expressed in all tissues examined.

It is found in the cell membrane. It carries out the reaction O-phospho-L-seryl-[protein] + H2O = L-seryl-[protein] + phosphate. It catalyses the reaction O-phospho-L-threonyl-[protein] + H2O = L-threonyl-[protein] + phosphate. Its function is as follows. Dephosphorylates the Ser/Thr receptor-like kinase RLK5. May function as a signaling component in a pathway involving RLK5. Binds and dephosphorylates CLAVATA1 (CLV1). Functions as a negative regulator of the CLV1 signaling in plant development. Dephosphorylates SERK1 receptor kinase on threonine residues in the A-loop. Dephosphorylation of SERK1 controls SERK1 internalization. Component of a signaling pathway which mediates adaptation to NaCl stress. Is not a component of the SALT OVERLY SENSITIVE (SOS) pathway. The protein is Protein phosphatase 2C 70 of Arabidopsis thaliana (Mouse-ear cress).